A 428-amino-acid polypeptide reads, in one-letter code: Phosphoribosylamine--glycine ligase (428 aa).

The ATP-grasp domain occupies 109–316; that stretch reads KDFLARHNIP…LVELCLAGTQ (208 aa). 135 to 196 provides a ligand contact to ATP; it reads VRQKGAPIVI…EEFLDGEEAS (62 aa). Glu286 and Asn288 together coordinate Mg(2+).

Belongs to the GARS family. Requires Mg(2+) as cofactor. Mn(2+) is required as a cofactor.

It catalyses the reaction 5-phospho-beta-D-ribosylamine + glycine + ATP = N(1)-(5-phospho-beta-D-ribosyl)glycinamide + ADP + phosphate + H(+). Its pathway is purine metabolism; IMP biosynthesis via de novo pathway; N(1)-(5-phospho-D-ribosyl)glycinamide from 5-phospho-alpha-D-ribose 1-diphosphate: step 2/2. This Yersinia pestis protein is Phosphoribosylamine--glycine ligase.